The primary structure comprises 412 residues: uncharacterized protein (412 aa).

Disordered stretches follow at residues 150 to 171 (NTPGSEQAQQQQQQQQQQQLGD), 177 to 196 (QITSSNNSGNSQQQQPQQQQ), and 302 to 412 (QAQQ…PLNP). The segment covering 156 to 168 (QAQQQQQQQQQQQ) has biased composition (low complexity). 2 stretches are compositionally biased toward polar residues: residues 177–187 (QITSSNNSGNS) and 310–321 (MGSSPTHSSPTI). Positions 335–345 (GGIINTNTNLN) are enriched in low complexity. Positions 350-363 (VSPNQPMPNSSPIL) are enriched in polar residues. Low complexity-rich tracts occupy residues 364 to 373 (PTNASSVVPP) and 381 to 394 (TSNNNSNNLGTTSP).

This is an uncharacterized protein from Dictyostelium discoideum (Social amoeba).